The sequence spans 303 residues: Nod factor export ATP-binding protein I (303 aa).

The ABC transporter domain maps to 5 to 235 (LQMRNVRKLY…EIGCDVVEVY (231 aa)). 37–44 (GPNGAGKT) is an ATP binding site.

Belongs to the ABC transporter superfamily. Lipooligosaccharide exporter (TC 3.A.1.102) family. The complex is composed of two ATP-binding proteins (NodI) and two transmembrane proteins (NodJ).

The protein localises to the cell inner membrane. Part of the ABC transporter complex NodIJ involved in the export of the nodulation factors (Nod factors), the bacterial signal molecules that induce symbiosis and subsequent nodulation induction. Nod factors are LCO (lipo-chitin oligosaccharide), a modified beta-1,4-linked N-acetylglucosamine oligosaccharide. This subunit is responsible for energy coupling to the transport system. The sequence is that of Nod factor export ATP-binding protein I from Cupriavidus metallidurans (strain ATCC 43123 / DSM 2839 / NBRC 102507 / CH34) (Ralstonia metallidurans).